A 376-amino-acid polypeptide reads, in one-letter code: Chaperone protein DnaJ (376 aa).

The J domain maps to aspartate 5–glycine 70. Residues glycine 132 to aspartate 209 form a CR-type zinc finger. 8 residues coordinate Zn(2+): cysteine 145, cysteine 148, cysteine 161, cysteine 164, cysteine 183, cysteine 186, cysteine 197, and cysteine 200. 4 CXXCXGXG motif repeats span residues cysteine 145–glycine 152, cysteine 161–glycine 168, cysteine 183–glycine 190, and cysteine 197–glycine 204.

Belongs to the DnaJ family. In terms of assembly, homodimer. Requires Zn(2+) as cofactor.

The protein localises to the cytoplasm. Participates actively in the response to hyperosmotic and heat shock by preventing the aggregation of stress-denatured proteins and by disaggregating proteins, also in an autonomous, DnaK-independent fashion. Unfolded proteins bind initially to DnaJ; upon interaction with the DnaJ-bound protein, DnaK hydrolyzes its bound ATP, resulting in the formation of a stable complex. GrpE releases ADP from DnaK; ATP binding to DnaK triggers the release of the substrate protein, thus completing the reaction cycle. Several rounds of ATP-dependent interactions between DnaJ, DnaK and GrpE are required for fully efficient folding. Also involved, together with DnaK and GrpE, in the DNA replication of plasmids through activation of initiation proteins. This is Chaperone protein DnaJ from Xanthomonas campestris pv. campestris (strain 8004).